Consider the following 297-residue polypeptide: Glucose-6-phosphate 1-epimerase (297 aa).

Substrate-binding residues include Arg57, Gln81, and Arg86. Ser88 carries the phosphoserine modification. His159 is a catalytic residue. Asp203 contacts substrate. The active site involves Glu264.

The protein belongs to the glucose-6-phosphate 1-epimerase family.

The catalysed reaction is alpha-D-glucose 6-phosphate = beta-D-glucose 6-phosphate. In terms of biological role, catalyzes the interconversion between the alpha and beta anomers from at least three hexose 6-phosphate sugars (Glc6P, Gal6P, and Man6P). This is Glucose-6-phosphate 1-epimerase from Saccharomyces cerevisiae (strain ATCC 204508 / S288c) (Baker's yeast).